The sequence spans 1845 residues: MAAAAASASQDELNQLERVFLRLGHAETDEQLQNIISKFLPPVLLKLSSTQEGVRKKVMELLVHLNKRIKSRPKIQLPVETLLVQYQDPAAVSFVTNFTIIYVKMGYPRLPVEKQCELAPTLLTAMEGKPQPQQDSLMHLLIPTLFHMKYPVESSKSASPFNLAEKPKTVQLLLDFMLDVLLMPYGYVLNESQSRQNSSSAQGSSSNSGGGSGIPQPPPGMSFYAAKRVIGDNPWTPEQLEQCKLGIVKFIEAEQVPELEAVLHLVIASSDTRHSVATAADLELKSKQSLIDWNNPAIINKMYKVYLGDIPLKTKEGAVLKPELKRDPVSTRVKLKIVPHLLRSRQAAETFPANIQVVYDGLFGTNTNSKLRTLSLQFVHHICITCPEIKIKPLGPMLLNGLTKLINEYKEDPKLLSMAYSAVGKLSSRMPHLFTKDIALVQQLFEALCKEEPETRLAIQEALSMMVGAYSTLEGAQRTLMEALVASYLIKPEVQVRQVAVKFASTVFPSDHIPSRYLLLLAAGDPREEVHGEAQRVLRCLPGRNRKESTSEQMPSFPEMVYYIQEKASHRMKTPVKYMTGTTVLPFNPAAFGEIVLYLRMCLAHSAGVVPTSQSLADMQDHAPAIGRYIRTLMSSGQMAPSSSNKSGETNPVQIYIGLLQQLLAGVGGLPVMYCLLEAVSVYPEKLATKFVDKTEWIKSLMNNSKEEMRELAALFYSVVVSTVSGNELKSMIEQLIKTTKDNHSPEIQHGSLLALGFTVGRYLAKKKMRMSEQQDLERNADTLPDQEELIQSATETIGSFLDSTSPLLAIAACTALGEIGRNGPLPIPSEGSGFTKLHLVESLLSRIPSSKETNKMKERAIQTLGYFPVGDGDFPHQKLLLQGLMDSVEAKQIELQFTIGEAITSAAIGTSSVAARDAWQMTEEEYTPPAGAKVNDVVPWVLDVILNKHIISPNPHVRQAACIWLLSLVRKLSTHKEVKSHLKEIQSAFVSVLSENDELSQDVASKGLGLVYELGNEQDQQELVSTLVETLMTGKRVKHEVSGETVVFQGGALGKTPDGQGLSTYKELCSLASDLSQPDLVYKFMNLANHHAMWNSRKGAAFGFNVIATRAGEQLAPFLPQLVPRLYRYQFDPNLGIRQAMTSIWNALVTDKSMVDKYLKEILQDLVKNLTSNMWRVRESSCLALNDLLRGRPLDDIIDKLPEIWETLFRVQDDIKESVRKAAELALKTLSKVCVKMCDPAKGAAGQRTIAALLPCLLDKGMMSTVTEVRALSINTLVKISKSAGAMLKPHAPKLIPALLESLSVLEPQVLNYLSLRATEQEKAAMDSARLSAAKSSPMMETINMCLQYLDVSVLGELVPRLCELIRSGVGLGTKGGCASVIVSLTTQCPQDLTPYSGKLMSALLSGLTDRNSVIQKSCAFAMGHLVRTSRDSSTEKLLQKLNGWYMEKEEPIYKTSCALTIHAIGRYSPDVLKNHAKEVLPLAFLGMHEIADEEKSEKEECNLWTEVWQENVPGSFGGIRLYLQELITITQKALQSQSWKMKAQGAIAMASIAKQTSSLVPPYLGMILTALLQGLAGRTWAGKEELLKAIACVVTACSAELEKSVPNQPSTNEILQAVLKECSKENVKYKIVAISCAADILKATKEDRFQEFSNIVIPLIKKNSLESSGVRTTKNEEENEKEKELQLEYLLGAFESLGKAWPRNAETQRCYRQELCKLMCERLKLSTWKVQLGVLQSMNAFFQGLMLLEEEHADPEALAEILLETCKSITYSLENKTYSSVRTEALSVIELLLKKLEESKQWECLTSECRVLLIESLATMEPDSRPELQEKAALLKKTLENLE.

N-acetylalanine is present on Ala2. 27 HEAT repeats span residues 28-65 (TDEQ…LVHL), 107-144 (YPRL…LIPT), 162-205 (NLAE…QGSS), 326-362 (RDPV…YDGL), 387-426 (PEIK…VGKL), 429-466 (RMPH…LSMM), 469-507 (AYST…ASTV), 683-720 (YPEK…YSVV), 721-759 (VSTV…LGFT), 783-820 (TLPD…LGEI), 829-868 (PSEG…LGYF), 870-907 (VGDG…ITSA), 931-969 (AGAK…LLSL), 975-1012 (THKE…LGLV), 1013-1050 (YELG…VVFQ), 1112-1149 (AGEQ…WNAL), 1152-1189 (DKSM…LNDL), 1194-1231 (PLDD…LKTL), 1243-1281 (KGAA…LVKI), 1285-1323 (AGAM…TEQE), 1348-1386 (LQYL…IVSL), 1390-1427 (CPQD…MGHL), 1517-1554 (SFGG…MASI), 1558-1595 (TSSL…IACV), 1605-1642 (KSVP…AADI), 1646-1683 (TKED…ENEK), and 1779-1822 (TYSS…LATM). Residues 193-207 (QSRQNSSSAQGSSSN) show a composition bias toward low complexity. The tract at residues 193–217 (QSRQNSSSAQGSSSNSGGGSGIPQP) is disordered. Ser830 is subject to Phosphoserine. Thr836 is subject to Phosphothreonine. Residue Lys1039 forms a Glycyl lysine isopeptide (Lys-Gly) (interchain with G-Cter in SUMO1) linkage.

Belongs to the ECM29 family. As to quaternary structure, non-stoichiometric component of the proteasome; associates with the 26S proteasome. Interacts (via N-terminus) with VPS11, VPS26A, VPS36, RAB11FIP4 and RABEP1. Interacts (via C-terminus) with DCTN1, DCTN2, KIF5B, MYH7, MYH10, MYO10 and ARF6.

It localises to the endoplasmic reticulum. Its subcellular location is the endoplasmic reticulum-Golgi intermediate compartment. The protein localises to the endosome. It is found in the cytoplasm. The protein resides in the cytoskeleton. It localises to the microtubule organizing center. Its subcellular location is the centrosome. The protein localises to the nucleus. It is found in the multivesicular body. The protein resides in the cytoplasmic vesicle. Adapter/scaffolding protein that binds to the 26S proteasome, motor proteins and other compartment specific proteins. May couple the proteasome to different compartments including endosome, endoplasmic reticulum and centrosome. May play a role in ERAD and other enhanced proteolysis. Promotes proteasome dissociation under oxidative stress. The polypeptide is Proteasome adapter and scaffold protein ECM29 (Homo sapiens (Human)).